The primary structure comprises 924 residues: Hexokinase-3 (924 aa).

The tract at residues 1-27 (MAAIEPSGLHPGERDSSCPQEGIPRPS) is disordered. Hexokinase domains follow at residues 27-471 (SGSL…MVTA) and 477-913 (ATHR…LVTR). A hexokinase small subdomain 1 region spans residues 84–220 (HGTEQGDFLV…TYNIDVVAMV (137 aa)). An ATP-binding site is contributed by 95–102 (ELGATGAS). 95–104 (ELGATGASLR) serves as a coordination point for D-glucose 6-phosphate. Residues S168, 185 to 186 (TK), and 221 to 222 (ND) contribute to the D-glucose site. Residues 221–460 (NDTVGTMMGC…CDVSFIPSVD (240 aa)) are hexokinase large subdomain 1. D-glucose 6-phosphate is bound by residues D222 and T245. Residues N248, E273, and 304-307 (QRFE) contribute to the D-glucose site. 426 to 428 (GGR) contacts D-glucose 6-phosphate. Residues 438 to 439 (CI) and 542 to 547 (DLGGTN) each bind ATP. The hexokinase small subdomain 2 stretch occupies residues 531–662 (DGSERGDFLA…AVELNVVAIV (132 aa)). 542-546 (DLGGT) is a D-glucose 6-phosphate binding site. D-glucose-binding positions include 610-611 (SF), 627-628 (TK), and 663-664 (ND). Residues 663–902 (NDTVGTMMSC…CTVTFLQSED (240 aa)) form a hexokinase large subdomain 2 region. Residues D664 and T687 each coordinate D-glucose 6-phosphate. T687 is an ATP binding site. D-glucose is bound by residues 689-690 (TN), E715, and E749. ATP-binding positions include 754 to 755 (GM), 791 to 795 (TKFLS), and 870 to 874 (TLYKL). D-glucose 6-phosphate-binding positions include 868–870 (DGT) and S904.

Belongs to the hexokinase family.

It catalyses the reaction a D-hexose + ATP = a D-hexose 6-phosphate + ADP + H(+). It carries out the reaction D-fructose + ATP = D-fructose 6-phosphate + ADP + H(+). The catalysed reaction is D-glucose + ATP = D-glucose 6-phosphate + ADP + H(+). The protein operates within carbohydrate metabolism; hexose metabolism. It functions in the pathway carbohydrate degradation; glycolysis; D-glyceraldehyde 3-phosphate and glycerone phosphate from D-glucose: step 1/4. Hexokinase is an allosteric enzyme inhibited by its product D-glucose 6-phosphate. Functionally, catalyzes the phosphorylation of hexose, such as D-glucose and D-fructose, to hexose 6-phosphate (D-glucose 6-phosphate and D-fructose 6-phosphate, respectively). Mediates the initial step of glycolysis by catalyzing phosphorylation of D-glucose to D-glucose 6-phosphate. The protein is Hexokinase-3 of Rattus norvegicus (Rat).